We begin with the raw amino-acid sequence, 273 residues long: MAIVKCKPTSAGRRHVVKVVNTELHKGKPFAALLDTKSKTGGRNNLGRITTRHIGGGHKQHYRLIDFKRNKLDIPAVVERLEYDPNRSANIALVLYKDGERRYILAPKGLVAGDTIQAGASAPIKVGNSLPMRNIPVGSTVHNVELKPGKGGQIARSAGAYVQIIAREGNYVTLRLRSGEMRKVLAECSATIGEVGNSEHMLRVLGKAGANRWRGIRPTVRGTAMNPVDHPHGGGEGRNFGKHPVTPWGVQTKGKKTRHNKRTDKFIVRRRGK.

A disordered region spans residues 221 to 273 (RGTAMNPVDHPHGGGEGRNFGKHPVTPWGVQTKGKKTRHNKRTDKFIVRRRGK). A compositionally biased stretch (basic residues) spans 253-273 (KGKKTRHNKRTDKFIVRRRGK).

Belongs to the universal ribosomal protein uL2 family. Part of the 50S ribosomal subunit. Forms a bridge to the 30S subunit in the 70S ribosome.

In terms of biological role, one of the primary rRNA binding proteins. Required for association of the 30S and 50S subunits to form the 70S ribosome, for tRNA binding and peptide bond formation. It has been suggested to have peptidyltransferase activity; this is somewhat controversial. Makes several contacts with the 16S rRNA in the 70S ribosome. The protein is Large ribosomal subunit protein uL2 of Glaesserella parasuis serovar 5 (strain SH0165) (Haemophilus parasuis).